A 668-amino-acid chain; its full sequence is Probable syringafactin export ATP-binding/permease protein SyfD (668 aa).

The 239-residue stretch at 22–260 (LRLQQVSRSF…APEAQPATPP (239 aa)) folds into the ABC transporter domain. Position 58-65 (58-65 (GASGSGKS)) interacts with ATP. The tract at residues 242–263 (RRTAQTTQPAPEAQPATPPGPA) is disordered. Low complexity predominate over residues 245–256 (AQTTQPAPEAQP). The next 5 helical transmembrane spans lie at 267-287 (LLAS…ALIS), 293-313 (LLTM…SAIG), 541-561 (LTLL…IGVM), 602-622 (MGGV…TLFV), and 631-651 (LASV…FGFV).

Belongs to the ABC transporter superfamily. Macrolide exporter (TC 3.A.1.122) family. Probably part of a tripartite efflux system, which is composed of an inner membrane transporter, a periplasmic membrane fusion protein, and an outer membrane component.

It localises to the cell inner membrane. In terms of biological role, probably involved in the export of syringafactins. In Pseudomonas syringae pv. tomato (strain ATCC BAA-871 / DC3000), this protein is Probable syringafactin export ATP-binding/permease protein SyfD.